The following is an 835-amino-acid chain: Phosphatidylinositol 4-kinase beta (835 aa).

Disordered stretches follow at residues 1-61 (MGDT…PLDV), 99-139 (SSAS…VRRR), and 267-341 (PSSQ…PVRL). The span at 19–59 (SPSTSTTSSLSLPSSPSSGPHPLTSSSPSTSEGLPTSSPPL) shows a compositional bias: low complexity. A PIK helical domain is found at 59 to 262 (LDVISEGLGE…GTKLRKLILS (204 aa)). Composition is skewed to basic and acidic residues over residues 125-134 (ISEEEVEPIK) and 267-276 (PSSQRIRREV). Positions 277-288 (PQPPPPYPPPLH) are enriched in pro residues. The span at 311–332 (DATVSISLSSNLKRTASNPKVE) shows a compositional bias: polar residues. The PI3K/PI4K catalytic domain maps to 554-820 (EPWQEKVRRI…MVDGSMRSIT (267 aa)). A G-loop region spans residues 560–566 (VRRIREG). Residues 687–695 (QVKDRHNGN) form a catalytic loop region. Residues 706 to 730 (HIDFGFILSSSPRNLGFETSAFKLT) form an activation loop region.

This sequence belongs to the PI3/PI4-kinase family. Type III PI4K subfamily. Mg(2+) serves as cofactor. The cofactor is Mn(2+). As to expression, expressed in the inner ear otic vesicles.

The protein localises to the endomembrane system. It is found in the mitochondrion outer membrane. Its subcellular location is the rough endoplasmic reticulum membrane. It catalyses the reaction a 1,2-diacyl-sn-glycero-3-phospho-(1D-myo-inositol) + ATP = a 1,2-diacyl-sn-glycero-3-phospho-(1D-myo-inositol 4-phosphate) + ADP + H(+). Functionally, phosphorylates phosphatidylinositol (PI) in the first committed step in the production of the second messenger inositol-1,4,5,-trisphosphate (PIP). May play an important role the in inner ear development. This Danio rerio (Zebrafish) protein is Phosphatidylinositol 4-kinase beta (pi4kb).